A 100-amino-acid polypeptide reads, in one-letter code: Urease subunit gamma (100 aa).

The protein belongs to the urease gamma subunit family. As to quaternary structure, heterotrimer of UreA (gamma), UreB (beta) and UreC (alpha) subunits. Three heterotrimers associate to form the active enzyme.

It localises to the cytoplasm. The enzyme catalyses urea + 2 H2O + H(+) = hydrogencarbonate + 2 NH4(+). Its pathway is nitrogen metabolism; urea degradation; CO(2) and NH(3) from urea (urease route): step 1/1. This chain is Urease subunit gamma, found in Azoarcus sp. (strain BH72).